A 381-amino-acid chain; its full sequence is Guanine nucleotide-binding protein G(olf) subunit alpha (381 aa).

The disordered stretch occupies residues 1–25 (MGCLGGNSKTTEDQGVDEKERREAN). A lipid anchor (N-palmitoyl glycine) is attached at Gly-2. A lipid anchor (S-palmitoyl cysteine) is attached at Cys-3. Residues 10 to 25 (TTEDQGVDEKERREAN) show a composition bias toward basic and acidic residues. The G-alpha domain maps to 41-381 (ATHRLLLLGA…RMHLKQYELL (341 aa)). The G1 motif stretch occupies residues 44–57 (RLLLLGAGESGKST). The GTP site is built by Glu-52, Ser-53, Gly-54, Lys-55, Ser-56, and Thr-57. Mg(2+) is bound at residue Ser-56. Thr-178 is subject to Phosphothreonine. The tract at residues 183 to 191 (DLLRCRVLT) is G2 motif. Residues Leu-185 and Arg-186 each contribute to the GTP site. At Arg-188 the chain carries ADP-ribosylarginine; by cholera toxin. Thr-191 serves as a coordination point for GTP. Mg(2+)-binding residues include Thr-191 and Asp-210. Positions 206 to 215 (FHMFDVGGQR) are G3 motif. The GTP site is built by Gly-213, Asn-279, Lys-280, Asp-282, and Ala-353. The interval 275–282 (ILFLNKQD) is G4 motif. The tract at residues 351–356 (TCAVDT) is G5 motif.

Belongs to the G-alpha family. G(s) subfamily. In terms of assembly, g proteins are composed of 3 units; alpha, beta and gamma. The alpha chain contains the guanine nucleotide binding site. Interacts with GAS2L2. Interacts (GDP-bound form) with RIC8B (via C-terminus); promoting GNAL folding and association with the plasma membrane. As to expression, detected in olfactory neuroepithelium, brain, testis, and to a lower extent in retina, lung alveoli, spleen. Trace amounts where seen in kidney, adrenal gland and liver. Found to be expressed in all the insulinomas examined.

It is found in the cell membrane. The enzyme catalyses GTP + H2O = GDP + phosphate + H(+). Functionally, guanine nucleotide-binding protein (G protein) involved as transducer in olfactory signal transduction controlled by G protein-coupled receptors (GPCRs). Contains the guanine nucleotide binding site and alternates between an active, GTP-bound state and an inactive, GDP-bound state. Signaling by an activated GPCR promotes GDP release and GTP binding. The alpha subunit has a low GTPase activity that converts bound GTP to GDP, thereby terminating the signal. Both GDP release and GTP hydrolysis are modulated by numerous regulatory proteins. GNAL/G(olf) alpha specifically mediates olfactory signal transduction within the olfactory neuroepithelium and the basal ganglia following GPCRs activation. Acts by promoting the specific activation of adenylyl cyclase ADCY3, resulting in increased levels of the signaling molecule cAMP. The chain is Guanine nucleotide-binding protein G(olf) subunit alpha from Homo sapiens (Human).